Here is a 185-residue protein sequence, read N- to C-terminus: Small ribosomal subunit protein uS5 (185 aa).

The S5 DRBM domain maps to 29–92 (LEEKVVKINR…EKAKKQLVRI (64 aa)).

This sequence belongs to the universal ribosomal protein uS5 family. In terms of assembly, part of the 30S ribosomal subunit. Contacts proteins S4 and S8.

In terms of biological role, with S4 and S12 plays an important role in translational accuracy. Located at the back of the 30S subunit body where it stabilizes the conformation of the head with respect to the body. The polypeptide is Small ribosomal subunit protein uS5 (Aster yellows witches'-broom phytoplasma (strain AYWB)).